Reading from the N-terminus, the 120-residue chain is FK506-binding protein 1B (120 aa).

The interval 1 to 26 (MGLEKQTLRMGNGKDHPQPGDPVELN) is disordered. The region spanning 20–115 (GDPVELNYTG…VFEVELLKIK (96 aa)) is the PPIase FKBP-type domain.

It belongs to the FKBP-type PPIase family. FKBP1 subfamily.

It catalyses the reaction [protein]-peptidylproline (omega=180) = [protein]-peptidylproline (omega=0). Inhibited by both FK506 and rapamycin. In terms of biological role, PPIases accelerate the folding of proteins. It catalyzes the cis-trans isomerization of proline imidic peptide bonds in oligopeptides. The polypeptide is FK506-binding protein 1B (fpr1B) (Aspergillus fumigatus (strain ATCC MYA-4609 / CBS 101355 / FGSC A1100 / Af293) (Neosartorya fumigata)).